The sequence spans 1130 residues: MGANASNYPHSCSPRVGGNSQAQQTFIGTSSYSQQGYGCESKLYSLDHGHEKPQDKKKRTSGLATLKKKFIKRRKSNRSADHAKQMRELLSGWDVRDVNALVEEYEGTSALKELSLQASLARPEARTLQKDMADLYEDKYCTDVDLIFQETCFPVHRAILAARCPFFKTLLSSSPEYGAEIIMDISTAGIDMPMFSALLHYLYTGEFGMEDSRFQNVDILVQLSEEFGTPNPLDVDMRGLFDYMCYYDVVLSFSSDSELVEAFGGNQNCLDEELKAHKAIISARSPFFRNLLQRRIRTGEEITDRTLRTPTRIILDESIIPKKYAKVILHCMYTDVVDLSVLHCSPSVGSLSEVQALVAGKPNMTRAEEAMELYHIALFLEFNMLAQGCEDIIAESISLDTLIAVLKWSSHPYGSKWVHRQAVHFLCEELSQVMTSDVFYELSKDHLLTAIQSDYLQASEQDILKYLIKWGEHQLMKRIADREPNLLSGTAHSVNKRGVKRRDLDIEELREILSSLLPFVRIEHILPINSEVLSDAMKRGLISTPPSDMLPTAEGGKSNAWLRQKNAGIYVRPRLFSPYVEEAKSVLDEMMVEQTDLVRLRMVRMSNVPDTLYMVSNAMPQCCHMISHQQISSNQSSPPSVVANEIPVPRLLIMKDMVRRLQELRHTEQVQRAYALNCGEGATVSYEIQIRVLREFGLADAAAELLQNPHKFFPDERFGDESPLLTMRQPGRCRVNSTPTAETMFTDLDSFVAFHPPLPPPPPPYHPPATPIHNQLKAGWKQRPPSHHPSRSFSYPCNHSLFHCRTAPKPGPPPVYLPGVKVAPPDCTNTTGLGRQTVAAAAAAAAASAAIIPEKQVCPQPVLNDLMPDIAMGVSTLSLKDRRLPELAADTELCQTVSEAGTGPPQHLSCIPQRHTNTSRKKPTLEQKADGRENQQEYPDLYDFSNAACRPSTPAPGRHSPSPAHGRYFGPDLYSHNKASPNGLKSVYLPGQTSPKKQEDPRREYPPSPDGHPHRQKREPIRLDVVEQPPQRPDFPSAASENASHGPAHVRARTAVETDLTFGLTSNRPPSHSACSSEVLEERSSRRLTDSEPLGHGAHQRNADLERGDSISRGRRSPSKPDFLYKKSAL.

The span at 1–10 (MGANASNYPH) shows a compositional bias: polar residues. Residues 1-24 (MGANASNYPHSCSPRVGGNSQAQQ) are disordered. The N-myristoyl glycine moiety is linked to residue G2. 2 consecutive BTB domains span residues 142–211 (TDVD…GMED) and 247–341 (YDVV…DLSV). One can recognise a BACK domain in the interval 413–479 (YGSKWVHRQA…WGEHQLMKRI (67 aa)). S722 carries the post-translational modification Phosphoserine. 2 disordered regions span residues 898 to 1050 (SEAG…PAHV) and 1062 to 1130 (FGLT…KSAL). 2 stretches are compositionally biased toward basic and acidic residues: residues 923 to 935 (PTLE…RENQ) and 996 to 1005 (KKQEDPRREY). A Phosphoserine modification is found at S1008. The span at 1063 to 1075 (GLTSNRPPSHSAC) shows a compositional bias: polar residues. 2 stretches are compositionally biased toward basic and acidic residues: residues 1080 to 1090 (LEERSSRRLTD) and 1101 to 1112 (RNADLERGDSIS).

As to expression, specifically expressed in embryonic epithelia.

The protein localises to the nucleus. Its function is as follows. Acts as a mediator of epithelial dynamics and organ branching by promoting cleft progression. Induced following accumulation of fibronectin in forming clefts, leading to local expression of the cell-scattering SNAIL2 and suppression of E-cadherin levels, thereby altering cell morphology and reducing cell-cell adhesion. This stimulates cell separation at the base of forming clefts by local, dynamic intercellular gap formation and promotes cleft progression. The protein is BTB/POZ domain-containing protein 7 (Btbd7) of Mus musculus (Mouse).